The chain runs to 81 residues: UPF0729 protein C18orf32 homolog (81 aa).

Residues 45–58 (AASDQKVSEKSNGT) show a composition bias toward polar residues. The segment at 45–81 (AASDQKVSEKSNGTCKPESNGEATANGSTIAADKKTD) is disordered.

It belongs to the UPF0729 family.

The sequence is that of UPF0729 protein C18orf32 homolog from Anoplopoma fimbria (Sablefish).